Here is a 459-residue protein sequence, read N- to C-terminus: Ribulose bisphosphate carboxylase (459 aa).

A substrate-binding site is contributed by Asn111. The Proton acceptor role is filled by Lys166. Residue Lys168 participates in substrate binding. Residues Lys191, Asp193, and Glu194 each coordinate Mg(2+). N6-carboxylysine is present on Lys191. His287 serves as the catalytic Proton acceptor. Substrate contacts are provided by Arg288, His321, and Ser368.

This sequence belongs to the RuBisCO large chain family. Type II subfamily. As to quaternary structure, homodimer. Mg(2+) is required as a cofactor.

The enzyme catalyses 2 (2R)-3-phosphoglycerate + 2 H(+) = D-ribulose 1,5-bisphosphate + CO2 + H2O. The catalysed reaction is D-ribulose 1,5-bisphosphate + O2 = 2-phosphoglycolate + (2R)-3-phosphoglycerate + 2 H(+). In terms of biological role, ruBisCO catalyzes two reactions: the carboxylation of D-ribulose 1,5-bisphosphate, the primary event in carbon dioxide fixation, as well as the oxidative fragmentation of the pentose substrate. Both reactions occur simultaneously and in competition at the same active site. The polypeptide is Ribulose bisphosphate carboxylase (Paramagnetospirillum magnetotacticum (Aquaspirillum magnetotacticum)).